Reading from the N-terminus, the 375-residue chain is Phytanoyl-CoA hydroxylase-interacting protein-like (375 aa).

Phosphoserine is present on residues serine 11, serine 12, and serine 15. Residue asparagine 22 is glycosylated (N-linked (GlcNAc...) asparagine). Phosphoserine is present on serine 24. A glycan (N-linked (GlcNAc...) asparagine) is linked at asparagine 36. One can recognise a Fibronectin type-III domain in the interval 51-160 (VPHNIKINNI…EIIEFCTADY (110 aa)).

The protein belongs to the PHYHIP family.

May play a role in the development of the central system. The polypeptide is Phytanoyl-CoA hydroxylase-interacting protein-like (Phyhipl) (Rattus norvegicus (Rat)).